We begin with the raw amino-acid sequence, 594 residues long: Grainyhead-like protein 3 homolog (594 aa).

2 transcription activation regions span residues 25–75 (NDDE…RIIT) and 28–91 (EAWS…SCIE). Positions 220-453 (ANRDFECTLE…DMETHPVLFI (234 aa)) constitute a Grh/CP2 DB domain. Residues 483-503 (SSQSFPESFEAPPSKQQTNED) are disordered.

The protein belongs to the grh/CP2 family. Grainyhead subfamily.

The protein resides in the nucleus. Transcription factor playing important roles in primary neurulation and in the differentiation of stratified epithelia of both ectodermal and endodermal origin. Binds directly to the consensus DNA sequence 5'-AACCGGTT-3' acting as an activator and repressor on distinct target genes. The sequence is that of Grainyhead-like protein 3 homolog (grhl3) from Xenopus tropicalis (Western clawed frog).